A 416-amino-acid polypeptide reads, in one-letter code: UPF0761 membrane protein Mpe_A1422 (416 aa).

6 consecutive transmembrane segments (helical) span residues 63 to 83, 120 to 140, 159 to 179, 198 to 218, 234 to 256, and 271 to 291; these read IALV…PMFG, LGTV…LTID, VLVY…SLTL, LSVL…AGLF, GGLF…LAQV, and IFLI…VIAA.

Belongs to the UPF0761 family.

It is found in the cell inner membrane. The chain is UPF0761 membrane protein Mpe_A1422 from Methylibium petroleiphilum (strain ATCC BAA-1232 / LMG 22953 / PM1).